Consider the following 215-residue polypeptide: Rac-like GTP-binding protein ARAC10 (215 aa).

15-22 (GDGAVGKT) serves as a coordination point for GTP. The short motif at 37-45 (YIPTVFDNF) is the Effector region element. Residues 62 to 66 (DTAGQ) and 120 to 123 (TKLD) contribute to the GTP site. Residues C202 and C208 are each lipidated (S-palmitoyl cysteine).

Belongs to the small GTPase superfamily. Rho family. In terms of assembly, component of the active ARAC10-IRC5-KIN13A complex. Interacts with ICR5.

It localises to the membrane. It is found in the cytoplasm. Its subcellular location is the cytoskeleton. Involved in local disassembly of cortical microtubules when associated with ICR5 and KIN13A. The sequence is that of Rac-like GTP-binding protein ARAC10 (ARAC10) from Arabidopsis thaliana (Mouse-ear cress).